We begin with the raw amino-acid sequence, 440 residues long: Transposon Ty1-DR2 Gag polyprotein (440 aa).

Polar residues-rich tracts occupy residues 1 to 31 (MESQ…TTQD) and 137 to 168 (VGTH…TNQH). Disordered stretches follow at residues 1 to 75 (MESQ…PQAA), 137 to 174 (VGTH…PPPI), and 350 to 440 (QQES…PGTY). Residues 299–401 (NNGIPINNKV…NSQSRTARAH (103 aa)) form an RNA-binding region. A compositionally biased stretch (basic and acidic residues) spans 363-372 (SPSDEKKDSR). The segment covering 373-409 (TYTNTTKPKSITRNSQKPNNSQSRTARAHNVSTSNNF) has biased composition (polar residues). A compositionally biased stretch (basic and acidic residues) spans 429–440 (NKHDLHLRPGTY).

As to quaternary structure, homotrimer.

The protein resides in the cytoplasm. Its function is as follows. Capsid protein (CA) is the structural component of the virus-like particle (VLP), forming the shell that encapsulates the retrotransposons dimeric RNA genome. The particles are assembled from trimer-clustered units and there are holes in the capsid shells that allow for the diffusion of macromolecules. CA also has nucleocapsid-like chaperone activity, promoting primer tRNA(i)-Met annealing to the multipartite primer-binding site (PBS), dimerization of Ty1 RNA and initiation of reverse transcription. The sequence is that of Transposon Ty1-DR2 Gag polyprotein (TY1A-DR2) from Saccharomyces cerevisiae (strain ATCC 204508 / S288c) (Baker's yeast).